Here is a 276-residue protein sequence, read N- to C-terminus: Small ribosomal subunit protein uS3 (276 aa).

In terms of domain architecture, KH type-2 spans 38-106 (IRRMMTKGME…QVQLNILEVK (69 aa)). Residues 216–228 (NAAARAGNRPARG) are compositionally biased toward low complexity. The disordered stretch occupies residues 216–276 (NAAARAGNRP…PAAESTGTEA (61 aa)). The span at 229-245 (GADRPAGRGGRGGERGG) shows a compositional bias: basic and acidic residues. The span at 254-269 (PAAEAPKADAAAAPAA) shows a compositional bias: low complexity.

It belongs to the universal ribosomal protein uS3 family. As to quaternary structure, part of the 30S ribosomal subunit. Forms a tight complex with proteins S10 and S14.

Functionally, binds the lower part of the 30S subunit head. Binds mRNA in the 70S ribosome, positioning it for translation. This chain is Small ribosomal subunit protein uS3, found in Streptomyces griseus subsp. griseus (strain JCM 4626 / CBS 651.72 / NBRC 13350 / KCC S-0626 / ISP 5235).